Here is a 124-residue protein sequence, read N- to C-terminus: MAITKEDVLEFISNLSVLELSELVKEFEEKFGVSAAPVMVAGAAGGAAVEAAEEKTEFNIVLVDAGDKKINVIKVVRALTGLGLKEAKDAVEGTPSVLKEGVSKDEAEAAKKELEEAGAKVELK.

This sequence belongs to the bacterial ribosomal protein bL12 family. In terms of assembly, homodimer. Part of the ribosomal stalk of the 50S ribosomal subunit. Forms a multimeric L10(L12)X complex, where L10 forms an elongated spine to which 2 to 4 L12 dimers bind in a sequential fashion. Binds GTP-bound translation factors.

Its function is as follows. Forms part of the ribosomal stalk which helps the ribosome interact with GTP-bound translation factors. Is thus essential for accurate translation. The protein is Large ribosomal subunit protein bL12 of Campylobacter fetus subsp. fetus (strain 82-40).